Consider the following 596-residue polypeptide: MAQAWAFLLPVLVLGSYVTSLFFPSYISNPLCGGDGGRSLFLCAQAPKDQDPSPAVSTMYKTAFHFQPAKNWMNDPSGPMYFNGIYHEFYQYNLNGPIFGDIVWGHSVSTDLVNWIGLEPALVRDTPSDIDGCWTGSVTILPGGKPIIIYTGGDIDQHQAQNIAFPKNRSDPYLREWIKAPNNPVLRPDEPGMNSIEFRDPTTGWIGPDGLWRMAVGGELNGYSAALLYKSEDFLNWTKVDHPLYSHNGSNMWECPDFFAVLPGNNAGLDLSAAIPQGAKHALKMSVDSVDKYMIGVYDLQRDAFVPDNVVDDRRLWLRIDYGTFYASKSFFDSNKNRRIIWGWSRETDSPSDDLEKGWAGLHTIPRTIWLAGDGKQLLQWPVEEIESLRTNEISHQGIELNKGDLFEIKEVDAFQADVEIDFELASIDDADPFDPSWLLDPEKHCGEAGASVPGGIGPFGLVILASDNMDEHTEVYFRVYKSQEKYMVLMCSDLRRSSLRPDLEKPAYGGFFEFDLEKERKISLRTLIDRSAVESFGGGGRVCITSRVYPAVLADVGRAHIYAFNNGSATVRVPQLSAWTMRKAQVNVEKGWSAI.

An N-terminal signal peptide occupies residues 1-20 (MAQAWAFLLPVLVLGSYVTS). Residue Asp75 is part of the active site. N-linked (GlcNAc...) asparagine glycans are attached at residues Asn168, Asn236, and Asn248. Cysteines 446 and 492 form a disulfide. Asn567 carries an N-linked (GlcNAc...) asparagine glycan.

Belongs to the glycosyl hydrolase 32 family.

It catalyses the reaction Hydrolysis of terminal, non-reducing (2-&gt;1)-linked beta-D-fructofuranose residues in fructans.. With respect to regulation, inhibited by sucrose. Its function is as follows. Hydrolyzes inulin-type beta-(2,1)-fructans, but not beta-(2,1)-linkages in branched fructans. Has low activity against beta-(2,6)-linked fructans. May play a role as a beta-(2,1)-trimmer during graminan biosynthesis. This Triticum aestivum (Wheat) protein is Fructan 1-exohydrolase w2.